The chain runs to 37 residues: Large ribosomal subunit protein bL36 (37 aa).

The protein belongs to the bacterial ribosomal protein bL36 family.

The chain is Large ribosomal subunit protein bL36 from Listeria innocua serovar 6a (strain ATCC BAA-680 / CLIP 11262).